We begin with the raw amino-acid sequence, 95 residues long: Cliotide T5 (95 aa).

Positions 1 to 30 form a cross-link, cyclopeptide (Gly-Asn); the sequence is GIPCGESCVFIPCISTVIGCSCKNKVCYRN. Cystine bridges form between Cys-4/Cys-20, Cys-8/Cys-22, and Cys-13/Cys-27. Positions 31 to 95 are cleaved as a propeptide — removed in mature form; sequence HVIAAEAKTM…KDHLKMSITN (65 aa).

Contains 3 disulfide bonds. In terms of processing, this is a cyclic peptide. As to expression, expressed in stem, shoot, root, leaf, pod and nodule but not in flower and seed (at protein level).

Probably participates in a plant defense mechanism. The chain is Cliotide T5 from Clitoria ternatea (Butterfly pea).